The chain runs to 109 residues: Nucleoid-associated protein BU482 (109 aa).

Belongs to the YbaB/EbfC family. Homodimer.

The protein resides in the cytoplasm. It is found in the nucleoid. Binds to DNA and alters its conformation. May be involved in regulation of gene expression, nucleoid organization and DNA protection. The polypeptide is Nucleoid-associated protein BU482 (Buchnera aphidicola subsp. Acyrthosiphon pisum (strain APS) (Acyrthosiphon pisum symbiotic bacterium)).